We begin with the raw amino-acid sequence, 532 residues long: MNQASTRFIFVTGGVVSSLGKGLAAASIGALLQARGFKICLRKLDPYLNIDPGTMSPIQHGEVFVTDDGAETDLDLGHYERFTGVKTTKNDNITTGKVYHNLLKKERRGDYLGQTVQIIPHVTDLINSFILHDTDKLDFVICEIGGTVGDIESQPFLESIRQIGYKLSKNNTIFVHLTLVPYIDAAMELKTKPTQHSVKELSSVGIQPDIILYRSKIPLSKEQRDKIANLCNVSSTNIIPALDVKNIYELPISYHNYNLDTQILNHFNIDSPEPDLRKWENILNISHAVTKTVNVAIIGKYIKLLDAYKSLIEALEHASIHNKVKLSIKWIDSRSLDSNEINIFDKVDSILIPGGFGDDGIQGKMTAITYARLNKIPFLGICMGMQLAIIEFANNVAHLEDANSTEFNLYCKNPVIHQLPELQQNFLGGSMKLGSCPCYLESGSKIFSIYQQSIIHERRRHRYAFNLQYKDLLEQHGLIFTGKSNNNNDSLIEVIELKDHPWFIGVQFHPEFKSSPFHSHPLFISFIKASLD.

An amidoligase domain region spans residues 1–269 (MNQASTRFIF…DTQILNHFNI (269 aa)). S17 is a binding site for CTP. S17 serves as a coordination point for UTP. ATP-binding positions include 18 to 23 (SLGKGL) and D75. The Mg(2+) site is built by D75 and E143. CTP contacts are provided by residues 150-152 (DIE), 190-195 (KTKPTQ), and K226. UTP contacts are provided by residues 190 to 195 (KTKPTQ) and K226. Positions 294–532 (NVAIIGKYIK…FISFIKASLD (239 aa)) constitute a Glutamine amidotransferase type-1 domain. Residue G355 coordinates L-glutamine. Residue C382 is the Nucleophile; for glutamine hydrolysis of the active site. Residues 383–386 (MGMQ), E406, and R462 each bind L-glutamine. Residues H509 and E511 contribute to the active site.

Belongs to the CTP synthase family. In terms of assembly, homotetramer.

The catalysed reaction is UTP + L-glutamine + ATP + H2O = CTP + L-glutamate + ADP + phosphate + 2 H(+). It catalyses the reaction L-glutamine + H2O = L-glutamate + NH4(+). The enzyme catalyses UTP + NH4(+) + ATP = CTP + ADP + phosphate + 2 H(+). Its pathway is pyrimidine metabolism; CTP biosynthesis via de novo pathway; CTP from UDP: step 2/2. With respect to regulation, allosterically activated by GTP, when glutamine is the substrate; GTP has no effect on the reaction when ammonia is the substrate. The allosteric effector GTP functions by stabilizing the protein conformation that binds the tetrahedral intermediate(s) formed during glutamine hydrolysis. Inhibited by the product CTP, via allosteric rather than competitive inhibition. Its function is as follows. Catalyzes the ATP-dependent amination of UTP to CTP with either L-glutamine or ammonia as the source of nitrogen. Regulates intracellular CTP levels through interactions with the four ribonucleotide triphosphates. The chain is CTP synthase from Ehrlichia chaffeensis (strain ATCC CRL-10679 / Arkansas).